We begin with the raw amino-acid sequence, 558 residues long: MSFAELLERTGGMGRFQITQVALMCFPILLMASHNLLQNFSAAIPDHKCKANDTWYQSNNTDRMGYVRLSAPLDADGQPDRCLEYVEVQWMIAGTNRTWANSSQLATRPCTEGWEYSKDEFNSTIITEWDLVCGHKNRRQLAQSVYMGGVLVGAIILGGLSDRYGRRALLIWSYFQMAVSGLCSAFSPNYLSYCIFRFLTGMALSGIGLNTTALIVEWVPTRVRTITGTLAGFSYTVGQLLLAGLAYAMRDWRWLQLCVSLPFFIFFLYSWWFPESARWLVLSGKTERAVKEMKKVAKLNGKEEEGEKITLESMRSDMIKELACAKSSYTVIDLIRTSTIRRISCALSLVWFSTSFAYYGLAMDLQNFNVSIYLIQVIFGAVDFPAKIFSTTAMIYVGRKFTQLMSLILGGVVILANSFVPHEMQTVRTGMAVFGKGCLAASFSCVFLYTTELYPTVIRQSGLGLCSTMARIGGIVAPLVKILGEYYPFLPLVIYGGAPIISGLCVFFLPETVNKPLPDTIEEVEKRIKAPKKENEMNEIVSLKKKEGMKENPVNDVL.

Over 1 to 15 the chain is Cytoplasmic; the sequence is MSFAELLERTGGMGR. The helical transmembrane segment at 16-36 threads the bilayer; the sequence is FQITQVALMCFPILLMASHNL. Topologically, residues 37–140 are extracellular; sequence LQNFSAAIPD…LVCGHKNRRQ (104 aa). A helical transmembrane segment spans residues 141-161; the sequence is LAQSVYMGGVLVGAIILGGLS. Topologically, residues 162 to 167 are cytoplasmic; it reads DRYGRR. The chain crosses the membrane as a helical span at residues 168-188; it reads ALLIWSYFQMAVSGLCSAFSP. Topologically, residues 189 to 197 are extracellular; the sequence is NYLSYCIFR. The chain crosses the membrane as a helical span at residues 198–218; it reads FLTGMALSGIGLNTTALIVEW. The Cytoplasmic portion of the chain corresponds to 219-225; that stretch reads VPTRVRT. Residues 226–246 traverse the membrane as a helical segment; it reads ITGTLAGFSYTVGQLLLAGLA. The Extracellular segment spans residues 247 to 253; it reads YAMRDWR. Residues 254–274 traverse the membrane as a helical segment; it reads WLQLCVSLPFFIFFLYSWWFP. Residues 275-342 are Cytoplasmic-facing; that stretch reads ESARWLVLSG…DLIRTSTIRR (68 aa). The helical transmembrane segment at 343–363 threads the bilayer; sequence ISCALSLVWFSTSFAYYGLAM. At 364 to 369 the chain is on the extracellular side; the sequence is DLQNFN. Residues 370-390 form a helical membrane-spanning segment; that stretch reads VSIYLIQVIFGAVDFPAKIFS. The Cytoplasmic portion of the chain corresponds to 391–400; sequence TTAMIYVGRK. The helical transmembrane segment at 401 to 421 threads the bilayer; that stretch reads FTQLMSLILGGVVILANSFVP. Topologically, residues 422 to 428 are extracellular; sequence HEMQTVR. Residues 429–449 traverse the membrane as a helical segment; sequence TGMAVFGKGCLAASFSCVFLY. At 450 to 462 the chain is on the cytoplasmic side; that stretch reads TTELYPTVIRQSG. A helical transmembrane segment spans residues 463 to 483; the sequence is LGLCSTMARIGGIVAPLVKIL. Topologically, residues 484–488 are extracellular; sequence GEYYP. Residues 489 to 509 form a helical membrane-spanning segment; sequence FLPLVIYGGAPIISGLCVFFL. The Cytoplasmic segment spans residues 510–558; that stretch reads PETVNKPLPDTIEEVEKRIKAPKKENEMNEIVSLKKKEGMKENPVNDVL. The segment covering 539-550 has biased composition (basic and acidic residues); that stretch reads EIVSLKKKEGMK. Residues 539–558 form a disordered region; that stretch reads EIVSLKKKEGMKENPVNDVL.

This sequence belongs to the major facilitator (TC 2.A.1) superfamily. Organic cation transporter (TC 2.A.1.19) family. In terms of processing, glycosylated. Glycosylation is necessary for proper targeting of the transporter to the plasma membrane.

The protein localises to the cell membrane. The protein resides in the basolateral cell membrane. It localises to the basal cell membrane. Involved in the renal elimination of endogenous and exogenous organic anions. Mediates the sodium-independent uptake of p-aminohippurate (PAH), 2,3-dimercapto-1-propanesulfonic acid (DMPS), cidofovir, adefovir, 9-(2-phosphonylmethoxyethyl) guanine (PMEG), 9-(2-phosphonylmethoxyethyl) diaminopurine (PMEDAP), ochratoxin (OTA), acyclovir (ACV), 3'-azido-3-'deoxythymidine (AZT), cimetidine (CMD), 2,4-dichloro-phenoxyacetate (2,4-D), hippurate (HA), indoleacetate (IA), indoxyl sulfate (IS) and 3-carboxy-4-methyl-5-propyl-2-furanpropionate (CMPF) and edaravone sulfate. PAH uptake is inhibited by p-chloromercuribenzenesulphonate (PCMBS), diethyl pyrocarbonate (DEPC), indomethacin, sulindac, diclofenac, carprofen, okadaic acid, benzothiazolylcysteine (BTC), S-chlorotrifluoroethylcysteine (CTFC), cysteine S-conjugates S-dichlorovinylcysteine (DCVC), furosemide, steviol, phorbol 12-myristate 13-acetate (PMA), calcium ionophore A23187, benzylpenicillin, bumetamide, losartan, probenecid, phenol red, urate, glutarate and alpha-ketoglutarate. The polypeptide is Solute carrier family 22 member 6-A (slc22a6-a) (Xenopus laevis (African clawed frog)).